Here is a 297-residue protein sequence, read N- to C-terminus: 4-hydroxy-tetrahydrodipicolinate synthase (297 aa).

Position 49 (Thr49) interacts with pyruvate. The Proton donor/acceptor role is filled by Tyr137. Lys165 (schiff-base intermediate with substrate) is an active-site residue. Ile208 lines the pyruvate pocket.

Belongs to the DapA family. In terms of assembly, homotetramer; dimer of dimers.

It is found in the cytoplasm. It carries out the reaction L-aspartate 4-semialdehyde + pyruvate = (2S,4S)-4-hydroxy-2,3,4,5-tetrahydrodipicolinate + H2O + H(+). It participates in amino-acid biosynthesis; L-lysine biosynthesis via DAP pathway; (S)-tetrahydrodipicolinate from L-aspartate: step 3/4. In terms of biological role, catalyzes the condensation of (S)-aspartate-beta-semialdehyde [(S)-ASA] and pyruvate to 4-hydroxy-tetrahydrodipicolinate (HTPA). The protein is 4-hydroxy-tetrahydrodipicolinate synthase of Gluconacetobacter diazotrophicus (strain ATCC 49037 / DSM 5601 / CCUG 37298 / CIP 103539 / LMG 7603 / PAl5).